The following is a 249-amino-acid chain: Probable aquaporin TIP-type (249 aa).

A run of 2 helical transmembrane segments spans residues 22 to 42 (AGLAEFISTFIFVFAGSGSGI) and 56 to 76 (AGLISASIAHAFALFVAVSVG). An NPA 1 motif is present at residues 85–87 (NPA). 3 helical membrane passes run 103-123 (IVYIIAQLLGSIVCSALLVFV), 137-157 (VGVGPALVLEIVMTFGLVYTV), and 169-189 (IGIIAPIAIGFIVGANILVGG). An NPA 2 motif is present at residues 197-199 (NPA). The chain crosses the membrane as a helical span at residues 217–237 (YWAGPLIGGGIAGLVYEVLFI).

Belongs to the MIP/aquaporin (TC 1.A.8) family. TIP (TC 1.A.8.10) subfamily. Expression is highest in root tips, with slightly lower levels of hybridizing mRNA in stems, and whole roots, and much lower levels in nodules and leaves.

Its subcellular location is the membrane. Functionally, aquaporins facilitate the transport of water and small neutral solutes across cell membranes. This is Probable aquaporin TIP-type (MCP1) from Medicago sativa (Alfalfa).